A 194-amino-acid polypeptide reads, in one-letter code: 4'-phosphooxetanocin A phosphatase (194 aa).

Positions 16 and 17 each coordinate 4'-phosphooxetanocin A. Trp-17 lines the oxetanocin A pocket. 3 residues coordinate Mg(2+): His-31, His-66, and Asp-67. 3 residues coordinate 4'-phosphooxetanocin A: His-75, Ser-78, and Lys-81. Positions 75 and 78 each coordinate oxetanocin A. Asp-132 is a Mg(2+) binding site.

This sequence belongs to the 5DNU family. Homodimer. The cofactor is Mg(2+). Co(2+) is required as a cofactor. Requires Mn(2+) as cofactor.

It carries out the reaction 4'-phosphooxetanocin A + H2O = oxetanocin A + phosphate. In terms of biological role, phosphohydrolase involved in the biosynthesis of oxetanocin A (OXT-A), a nucleoside analog with antitumor, antiviral and antibacterial properties. Catalyzes the hydrolysis of phosphooxetanocin A (OXT-A-P) to generate oxetanocin A (OXT-A) and a molecule of inorganic phosphate. Can also bind and hydrolyze OXT triphosphate (OXT-A-PPP) and OXT diphosphate (OXT-A-PP), and thus catalyze the sequential hydrolysis of tri-, di- and mono-phosphorylated oxetanocin A compounds, releasing one molecule of inorganic phosphate at a time. In vitro can also use dATP, dAMP and dADP. The protein is 4'-phosphooxetanocin A phosphatase of Priestia megaterium (Bacillus megaterium).